A 158-amino-acid chain; its full sequence is Transcription elongation factor GreA (158 aa).

A coiled-coil region spans residues Val-14–Asn-76.

It belongs to the GreA/GreB family.

In terms of biological role, necessary for efficient RNA polymerase transcription elongation past template-encoded arresting sites. The arresting sites in DNA have the property of trapping a certain fraction of elongating RNA polymerases that pass through, resulting in locked ternary complexes. Cleavage of the nascent transcript by cleavage factors such as GreA or GreB allows the resumption of elongation from the new 3'terminus. GreA releases sequences of 2 to 3 nucleotides. This chain is Transcription elongation factor GreA, found in Clostridium acetobutylicum (strain ATCC 824 / DSM 792 / JCM 1419 / IAM 19013 / LMG 5710 / NBRC 13948 / NRRL B-527 / VKM B-1787 / 2291 / W).